The sequence spans 574 residues: Sodium/hydrogen exchanger 8 (574 aa).

The next 11 helical transmembrane spans lie at 53 to 73, 77 to 97, 116 to 136, 149 to 169, 184 to 204, 254 to 274, 304 to 324, 347 to 367, 373 to 393, 410 to 430, and 444 to 464; these read MTIF…HLLI, LHFL…GAFI, PNMF…YSLH, LFSV…IYFL, FAFG…IFNA, LGYF…TGLI, GLAE…GIVM, VAFM…FSFP, SFVI…IFPL, MFIM…SLHL, and TTII…MPLI.

Belongs to the monovalent cation:proton antiporter 1 (CPA1) transporter (TC 2.A.36) family.

Its subcellular location is the golgi apparatus membrane. Involved in pH regulation to eliminate acids generated by active metabolism or to counter adverse environmental conditions. Major proton extruding system driven by the inward sodium ion chemical gradient. Plays an important role in signal transduction. This chain is Sodium/hydrogen exchanger 8, found in Gallus gallus (Chicken).